Reading from the N-terminus, the 151-residue chain is Ubiquitin-like protein 4A-B (151 aa).

The Ubiquitin-like domain maps to 1-76 (MILTIKPLKG…LNLVVRPAGE (76 aa)).

In terms of assembly, component of the BAT3 complex.

Its subcellular location is the cytoplasm. The protein resides in the cytosol. Its function is as follows. Component of the BAT3 complex, a multiprotein complex involved in the post-translational delivery of tail-anchored (TA) membrane proteins to the endoplasmic reticulum membrane. TA membrane proteins, also named type II transmembrane proteins, contain a single C-terminal transmembrane region. The protein is Ubiquitin-like protein 4A-B (ubl4ab) of Oncorhynchus mykiss (Rainbow trout).